Here is a 170-residue protein sequence, read N- to C-terminus: MALLNVLIYPDERLKTVAEPVSVFDEELQTFIDNMFETMYHEEGIGLAATQVNVHKRIITIDIEGTKENQIVLINPKILESFGETGIEEGCLSLPGLRGFVPRKETVKVKAQNRQGEEFMLDADGLLAICIQHEIDHLNGIVFADHLSPLKRQRMKEKLLKLQKQIAKNR.

Fe cation contacts are provided by cysteine 91 and histidine 133. Glutamate 134 is an active-site residue. Residue histidine 137 participates in Fe cation binding.

This sequence belongs to the polypeptide deformylase family. Fe(2+) is required as a cofactor.

The enzyme catalyses N-terminal N-formyl-L-methionyl-[peptide] + H2O = N-terminal L-methionyl-[peptide] + formate. Functionally, removes the formyl group from the N-terminal Met of newly synthesized proteins. Requires at least a dipeptide for an efficient rate of reaction. N-terminal L-methionine is a prerequisite for activity but the enzyme has broad specificity at other positions. The protein is Peptide deformylase of Histophilus somni (strain 2336) (Haemophilus somnus).